Here is a 399-residue protein sequence, read N- to C-terminus: Argininosuccinate synthase (399 aa).

Residues 10-18 (AYSGGVDTS) and alanine 38 each bind ATP. Tyrosine 89 contributes to the L-citrulline binding site. Residue glycine 119 participates in ATP binding. Threonine 121, asparagine 125, and aspartate 126 together coordinate L-aspartate. Asparagine 125 is an L-citrulline binding site. The L-citrulline site is built by arginine 129, serine 177, serine 186, glutamate 262, and tyrosine 274.

It belongs to the argininosuccinate synthase family. Type 1 subfamily. Homotetramer.

Its subcellular location is the cytoplasm. It catalyses the reaction L-citrulline + L-aspartate + ATP = 2-(N(omega)-L-arginino)succinate + AMP + diphosphate + H(+). It participates in amino-acid biosynthesis; L-arginine biosynthesis; L-arginine from L-ornithine and carbamoyl phosphate: step 2/3. The chain is Argininosuccinate synthase from Picosynechococcus sp. (strain ATCC 27264 / PCC 7002 / PR-6) (Agmenellum quadruplicatum).